Reading from the N-terminus, the 227-residue chain is MTAIAPVITIDGPSGAGKGTLCKAMAEALQWHLLDSGAIYRVLALAALHHHVDVASEDALVPLASHLDVRFVSTNGNLEVILEGEDVSGEIRTQEVANAASQVAAFPRVREALLRRQRAFRELPGLIADGRDMGTVVFPDAPVKIFLDASSEERAHRRMLQLQEKGFSVNFERLLAEIKERDDRDRNRAVAPLVPASDALVLDSTTLSIEQVIEKALQYARQKLALA.

12 to 20 (GPSGAGKGT) is an ATP binding site.

It belongs to the cytidylate kinase family. Type 1 subfamily.

It localises to the cytoplasm. The catalysed reaction is CMP + ATP = CDP + ADP. The enzyme catalyses dCMP + ATP = dCDP + ADP. This is Cytidylate kinase from Shigella sonnei (strain Ss046).